We begin with the raw amino-acid sequence, 415 residues long: ATP-dependent Clp protease ATP-binding subunit ClpX (415 aa).

The region spanning 1 to 53 is the ClpX-type ZB domain; the sequence is MLRSKGDLVLGCSFCGKKEDERRRIVTGHGVSICNYCVERCAEYLRDRKPSAL. 4 residues coordinate Zn(2+): Cys12, Cys15, Cys34, and Cys37. 118 to 125 is a binding site for ATP; the sequence is PTGSGKTL.

The protein belongs to the ClpX chaperone family. Component of the ClpX-ClpP complex. Forms a hexameric ring that, in the presence of ATP, binds to fourteen ClpP subunits assembled into a disk-like structure with a central cavity, resembling the structure of eukaryotic proteasomes.

Its function is as follows. ATP-dependent specificity component of the Clp protease. It directs the protease to specific substrates. Can perform chaperone functions in the absence of ClpP. The polypeptide is ATP-dependent Clp protease ATP-binding subunit ClpX (Treponema pallidum (strain Nichols)).